A 403-amino-acid polypeptide reads, in one-letter code: S-adenosylmethionine synthase (403 aa).

Residue 141–146 (GQGSVD) participates in ATP binding.

The protein belongs to the AdoMet synthase 2 family. It depends on Mg(2+) as a cofactor.

The catalysed reaction is L-methionine + ATP + H2O = S-adenosyl-L-methionine + phosphate + diphosphate. It functions in the pathway amino-acid biosynthesis; S-adenosyl-L-methionine biosynthesis; S-adenosyl-L-methionine from L-methionine: step 1/1. Functionally, catalyzes the formation of S-adenosylmethionine from methionine and ATP. In Methanococcus aeolicus (strain ATCC BAA-1280 / DSM 17508 / OCM 812 / Nankai-3), this protein is S-adenosylmethionine synthase.